The sequence spans 465 residues: UDP-N-acetylmuramoylalanine--D-glutamate ligase (465 aa).

116 to 122 contributes to the ATP binding site; the sequence is GTNGKTT.

This sequence belongs to the MurCDEF family.

The protein resides in the cytoplasm. It catalyses the reaction UDP-N-acetyl-alpha-D-muramoyl-L-alanine + D-glutamate + ATP = UDP-N-acetyl-alpha-D-muramoyl-L-alanyl-D-glutamate + ADP + phosphate + H(+). It functions in the pathway cell wall biogenesis; peptidoglycan biosynthesis. Its function is as follows. Cell wall formation. Catalyzes the addition of glutamate to the nucleotide precursor UDP-N-acetylmuramoyl-L-alanine (UMA). This chain is UDP-N-acetylmuramoylalanine--D-glutamate ligase, found in Thermobifida fusca (strain YX).